A 144-amino-acid chain; its full sequence is Large ribosomal subunit protein uL15 (144 aa).

Positions 1–48 (MQLNNLKPADGSKHAKRRVGRGIGSGLGKTAGRGHKGQKSRSGGFHKV) are disordered. The span at 21-31 (RGIGSGLGKTA) shows a compositional bias: gly residues.

Belongs to the universal ribosomal protein uL15 family. As to quaternary structure, part of the 50S ribosomal subunit.

Binds to the 23S rRNA. The polypeptide is Large ribosomal subunit protein uL15 (Cupriavidus metallidurans (strain ATCC 43123 / DSM 2839 / NBRC 102507 / CH34) (Ralstonia metallidurans)).